Consider the following 434-residue polypeptide: MSLLSDRQKDDLHKAMLDYLYANNHTAAFNALKESAGITYTPDPTARYTGLLEKKWTSVIRLQKKIMELENRNAALQEELSMSPARRAASQADWLPRAPAAHVLTGHRAPLTSIAFHPQYSILASASEDTTVKIWDWETGEFERTLKGHTKPVNDLDFDHKGHLLVTCSSDLFIKIWDSQNEWKNTKTFVGHDHAVSAVRFMPGDQLIVSASRDRTIRVFDVASTHQVRTLSGHSEWVRCVIPSADGTMLASGSKDQTVRLWDPLTGEPKSELRGHENDVEAVAFAPISAYAAIRELAGIPNDRTKRHGLFLASGARDKTVKLWDTQTGQMIRNLAGHDNWVRALAFHPSGKYLLSSSDDKTVRVWELSTGRCLRIVEAHSHFVAALAWGRQAAGKSGSEKKVNGVDSVDAEPEKVVNVVATGSVDETIKIWLP.

Residues 8 to 40 form the LisH domain; sequence QKDDLHKAMLDYLYANNHTAAFNALKESAGITY. Residues 57-83 adopt a coiled-coil conformation; sequence TSVIRLQKKIMELENRNAALQEELSMS. 7 WD repeats span residues 106-147, 149-187, 191-230, 233-272, 275-334, 337-378, and 401-434; these read GHRA…RTLK, HTKPVNDLDFDHKGHLLVTCSSDLFIKIWDSQNEWKNTK, GHDHAVSAVRFMPGDQLIVSASRDRTIRVFDVASTHQVRT, GHSEWVRCVIPSADGTMLASGSKDQTVRLWDPLTGEPKSE, GHEN…MIRN, GHDN…RIVE, and KKVNGVDSVDAEPEKVVNVVATGSVDETIKIWLP.

It belongs to the WD repeat LIS1/nudF family. In terms of assembly, self-associates. Interacts with NDL1 and dynein.

It is found in the cytoplasm. It localises to the cytoskeleton. Its subcellular location is the spindle pole. In terms of biological role, positively regulates the activity of the minus-end directed microtubule motor protein dynein. May enhance dynein-mediated microtubule sliding by targeting dynein to the microtubule plus end. Required for nuclear migration during vegetative growth as well as development. Required for retrograde early endosome (EE) transport from the hyphal tip. Required for localization of dynein to the mitotic spindle poles. Recruits additional proteins to the dynein complex at SPBs. The protein is Nuclear distribution protein PAC1 of Coprinopsis cinerea (strain Okayama-7 / 130 / ATCC MYA-4618 / FGSC 9003) (Inky cap fungus).